A 378-amino-acid chain; its full sequence is Protein RecA (378 aa).

79 to 86 (GPESSGKT) serves as a coordination point for ATP.

Belongs to the RecA family.

It is found in the cytoplasm. Can catalyze the hydrolysis of ATP in the presence of single-stranded DNA, the ATP-dependent uptake of single-stranded DNA by duplex DNA, and the ATP-dependent hybridization of homologous single-stranded DNAs. It interacts with LexA causing its activation and leading to its autocatalytic cleavage. The polypeptide is Protein RecA (Streptococcus pyogenes serotype M1).